Here is a 1060-residue protein sequence, read N- to C-terminus: Carbamoyl phosphate synthase large chain (1060 aa).

Residues 1–401 (MPKRTDIRKI…SLLKAVRSLE (401 aa)) are carboxyphosphate synthetic domain. Residues arginine 129, arginine 169, glycine 175, glycine 176, glutamine 208, isoleucine 210, glutamate 215, glycine 241, isoleucine 242, histidine 243, glutamine 284, and glutamate 298 each coordinate ATP. Residues 133–327 (KNLMNQLNEP…IAKMAAKIAV (195 aa)) enclose the ATP-grasp 1 domain. Residues glutamine 284, glutamate 298, and asparagine 300 each coordinate Mg(2+). Glutamine 284, glutamate 298, and asparagine 300 together coordinate Mn(2+). The tract at residues 402–546 (IGTAHLELDG…YTTYEQENES (145 aa)) is oligomerization domain. The carbamoyl phosphate synthetic domain stretch occupies residues 547-929 (LVSAKPSILV…ALYKAFEASG (383 aa)). An ATP-grasp 2 domain is found at 671–861 (DQLIQELNIP…MAQLATQLIL (191 aa)). ATP is bound by residues arginine 707, arginine 746, leucine 748, glutamate 752, glycine 777, valine 778, histidine 779, serine 780, glutamine 820, and glutamate 832. The Mg(2+) site is built by glutamine 820, glutamate 832, and asparagine 834. Residues glutamine 820, glutamate 832, and asparagine 834 each coordinate Mn(2+). The region spanning 930 to 1060 (MHLPSHGNVL…ESQSLLTKPL (131 aa)) is the MGS-like domain. The tract at residues 930–1060 (MHLPSHGNVL…ESQSLLTKPL (131 aa)) is allosteric domain.

Belongs to the CarB family. In terms of assembly, composed of two chains; the small (or glutamine) chain promotes the hydrolysis of glutamine to ammonia, which is used by the large (or ammonia) chain to synthesize carbamoyl phosphate. Tetramer of heterodimers (alpha,beta)4. It depends on Mg(2+) as a cofactor. Mn(2+) is required as a cofactor.

The catalysed reaction is hydrogencarbonate + L-glutamine + 2 ATP + H2O = carbamoyl phosphate + L-glutamate + 2 ADP + phosphate + 2 H(+). It catalyses the reaction hydrogencarbonate + NH4(+) + 2 ATP = carbamoyl phosphate + 2 ADP + phosphate + 2 H(+). Its pathway is amino-acid biosynthesis; L-arginine biosynthesis; carbamoyl phosphate from bicarbonate: step 1/1. It functions in the pathway pyrimidine metabolism; UMP biosynthesis via de novo pathway; (S)-dihydroorotate from bicarbonate: step 1/3. In terms of biological role, large subunit of the glutamine-dependent carbamoyl phosphate synthetase (CPSase). CPSase catalyzes the formation of carbamoyl phosphate from the ammonia moiety of glutamine, carbonate, and phosphate donated by ATP, constituting the first step of 2 biosynthetic pathways, one leading to arginine and/or urea and the other to pyrimidine nucleotides. The large subunit (synthetase) binds the substrates ammonia (free or transferred from glutamine from the small subunit), hydrogencarbonate and ATP and carries out an ATP-coupled ligase reaction, activating hydrogencarbonate by forming carboxy phosphate which reacts with ammonia to form carbamoyl phosphate. In Latilactobacillus sakei subsp. sakei (strain 23K) (Lactobacillus sakei subsp. sakei), this protein is Carbamoyl phosphate synthase large chain.